A 165-amino-acid chain; its full sequence is Deoxyuridine 5'-triphosphate nucleotidohydrolase (165 aa).

Substrate contacts are provided by residues 66-68 (RSG), Asn79, 83-85 (TVD), and Lys93. Residues 134-165 (ETSRGAGGHGSSGGHASLTPGARSAARVAQEG) form a disordered region.

The protein belongs to the dUTPase family. Mg(2+) is required as a cofactor.

The enzyme catalyses dUTP + H2O = dUMP + diphosphate + H(+). It functions in the pathway pyrimidine metabolism; dUMP biosynthesis; dUMP from dCTP (dUTP route): step 2/2. Its function is as follows. This enzyme is involved in nucleotide metabolism: it produces dUMP, the immediate precursor of thymidine nucleotides and it decreases the intracellular concentration of dUTP so that uracil cannot be incorporated into DNA. This chain is Deoxyuridine 5'-triphosphate nucleotidohydrolase, found in Nocardia farcinica (strain IFM 10152).